Here is a 396-residue protein sequence, read N- to C-terminus: MTINPVSRKVAWLRVVTLAIAAFIFNTTEFVPVGLLSDIAESFHMQTAQVGIMLTIYAWVVAVMSLPFMLLTSQMERRKLLICLFVLFIASHVLSFLAWNFTVLVISRIGIAFAHAIFWSITASLAIRLAPAGKRAQALSLIATGTALAMVLGLPIGRVVGQYFGWRTTFFAIGMGALITLLCLIKLLPKLPSEHSGSLKSLPLLFRCPALMSLYVLTVVVVTAHYTAYSYIEPFVQNVAGLSANFATVLLLLLGGAGIIGSLVFGKLGNRHASSLVSIAIALLVVCLLLLLPAADSEAHLAILSIFWGIAIMVIGLGMQVKVLALAPDATDVAMALFSGIFNIGIGAGALVGNQVSLHWSMSAIGYIGAIPACAALVWAVLIFRKWPVTLEEQPH.

12 consecutive transmembrane segments (helical) span residues 15–35, 50–70, 81–101, 103–123, 136–156, 169–189, 202–222, 246–266, 275–295, 301–321, 333–353, and 364–384; these read VVTL…PVGL, VGIM…PFML, LICL…AWNF, VLVI…SITA, AQAL…GLPI, TFFA…KLLP, LPLL…VVVV, FATV…LVFG, SLVS…LPAA, LAIL…GMQV, VAMA…ALVG, and AIGY…VLIF.

The protein belongs to the major facilitator superfamily. SotB (TC 2.A.1.2) family.

The protein localises to the cell inner membrane. Functionally, involved in the efflux of sugars. The physiological role may be the reduction of the intracellular concentration of toxic sugars or sugar metabolites. In Salmonella paratyphi A (strain ATCC 9150 / SARB42), this protein is Probable sugar efflux transporter.